The sequence spans 129 residues: uncharacterized protein (129 aa).

Residues 34–57 (SAPLRPPRELHAAPPPATPTQTVV) form a disordered region.

This is an uncharacterized protein from Homo sapiens (Human).